Consider the following 85-residue polypeptide: Large ribosomal subunit protein bL27 (85 aa).

The disordered stretch occupies residues 1–25; it reads MAHKKAGGSSRNGRDSHSKRLGVKH.

This sequence belongs to the bacterial ribosomal protein bL27 family.

The sequence is that of Large ribosomal subunit protein bL27 from Buchnera aphidicola subsp. Baizongia pistaciae (strain Bp).